Consider the following 635-residue polypeptide: Moesin/ezrin/radixin homolog 2 (635 aa).

An FERM domain is found at Leu-12–Arg-305.

Interacts with Moe and arm at the adherens junction. Forms a complex with Kibra and Ex. Interacts (via FERM domain) with Sav (via FBM motif). Interacts with Schip1. As to expression, expressed predominantly in the germline. Expressed in the developing oocyte from stage 6 to the end of oogenesis and in the apical ends of follical cells from stage 10. Ubiquitous expression throughout embryogenesis with enhanced expression in mesoderm of early embryos and midgut of late embryos. In embryonic CNS, expression is seen in neuropil and developing brain and is enhanced in neuronal cell bodies. In embryonic PNS, expression is seen within the cell body. In third instar larvae, expression is uniform in the eye imaginal disk and is enhanced at the morphogenetic furrow. In pupal eyes, expression is seen in the cytoplasm of secondary and tertiary pigment cells, bristle precursor cells and rhabdomeres.

Its subcellular location is the cell junction. The protein resides in the adherens junction. It localises to the cell membrane. The protein localises to the cytoplasm. It is found in the cytoskeleton. Its subcellular location is the apical cell membrane. The protein resides in the cell projection. It localises to the rhabdomere. Regulator of the Hippo/SWH (Sav/Wts/Hpo) signaling pathway, a signaling pathway that plays a pivotal role in organ size control and tumor suppression by restricting proliferation and promoting apoptosis. The core of this pathway is composed of a kinase cascade wherein Hippo (Hpo), in complex with its regulatory protein Salvador (Sav), phosphorylates and activates Warts (Wts) in complex with its regulatory protein Mats, which in turn phosphorylates and inactivates the Yorkie (Yki) oncoprotein. Mer acts synergistically along with Ex and Kibra to regulate the Hippo signaling pathway. The sequence is that of Moesin/ezrin/radixin homolog 2 (Mer) from Drosophila melanogaster (Fruit fly).